A 142-amino-acid chain; its full sequence is Large ribosomal subunit protein uL13 (142 aa).

The protein belongs to the universal ribosomal protein uL13 family. In terms of assembly, part of the 50S ribosomal subunit.

This protein is one of the early assembly proteins of the 50S ribosomal subunit, although it is not seen to bind rRNA by itself. It is important during the early stages of 50S assembly. This is Large ribosomal subunit protein uL13 from Teredinibacter turnerae (strain ATCC 39867 / T7901).